The sequence spans 816 residues: Protein kinase C-binding protein NELL2 (816 aa).

A signal peptide spans 1 to 21 (MESRVLLRTFCLIFGLGAVWG). 4 N-linked (GlcNAc...) asparagine glycosylation sites follow: Asn-53, Asn-225, Asn-293, and Asn-298. Residues 64–228 (PRSVKASTAT…AQCPDLNRTC (165 aa)) enclose the Laminin G-like domain. The region spanning 272–331 (RTCTMKGTTYREFESWIDGCKNCTCLNGTIQCETLICPNPDCPLNSALAYVDGKCCKECK) is the VWFC 1 domain. The EGF-like 1 domain occupies 397–439 (GYDFCSERHNCMENSVCRNLNDRAVCSCRDGFRALREDNAYCE). Cystine bridges form between Cys-401/Cys-413, Cys-407/Cys-422, and Cys-424/Cys-438. Ca(2+)-binding residues include Asp-440, Ile-441, and Glu-443. The EGF-like 2; calcium-binding domain maps to 440–481 (DIDECAEGRHYCRENTMCVNTPGSFMCICKTGYIRIDDYSCT). 9 disulfides stabilise this stretch: Cys-444–Cys-457, Cys-451–Cys-466, Cys-468–Cys-480, Cys-486–Cys-499, Cys-493–Cys-508, Cys-510–Cys-521, Cys-525–Cys-535, Cys-529–Cys-541, and Cys-543–Cys-552. Residues Asn-459, Thr-460, and Ser-463 each coordinate Ca(2+). Residues 482–522 (EHDECITNQHNCDENALCFNTVGGHNCVCKPGYTGNGTTCK) form the EGF-like 3; calcium-binding domain. Asn-517 carries N-linked (GlcNAc...) asparagine glycosylation. One can recognise an EGF-like 4 domain in the interval 523–553 (AFCKDGCRNGGACIAANVCACPQGFTGPSCE). Thr-548 carries O-linked (GlcNAc...) threonine glycosylation. Residues Asp-555, Ile-556, and Glu-558 each coordinate Ca(2+). Residues 555–601 (DIDECSDGFVQCDSRANCINLPGWYHCECRDGYHDNGMFSPSGESCE) form the EGF-like 5; calcium-binding domain. Cystine bridges form between Cys-559-Cys-572, Cys-566-Cys-581, and Cys-583-Cys-600. The Ca(2+) site is built by Asn-574, Leu-575, and Trp-578. Ca(2+) contacts are provided by Asp-602, Ile-603, and Glu-605. The EGF-like 6; calcium-binding domain occupies 602-637 (DIDECGTGRHSCANDTICFNLDGGYDCRCPHGKNCT). Disulfide bonds link Cys-606–Cys-619, Cys-613–Cys-628, and Cys-630–Cys-636. Asn-615 is a glycosylation site (N-linked (GlcNAc...) asparagine). Residues Asn-621, Leu-622, and Gly-625 each contribute to the Ca(2+) site. N-linked (GlcNAc...) asparagine glycosylation occurs at Asn-635. 2 consecutive VWFC domains span residues 638–693 (GDCI…PECD) and 698–756 (SQCL…PRCV).

Homotrimer. Binds to PRKCB. Interacts with NICOL1; this interaction triggers epididymal differentiation.

It localises to the secreted. Plays multiple roles in neural tissues, regulates neuronal proliferation, survival, differentiation, polarization, as well as axon guidance and synaptic functions. Plays an important role in axon development during neuronal differentiation through the MAPK intracellular signaling pathway. Via binding to its receptor ROBO3, plays a role in axon guidance, functions as a repulsive guidance cue for commissural axons, helping to steer them across the spinal cord midline. Required for neuron survival through the modulation of MAPK signaling pathways too. Involved in the regulation of hypothalamic GNRH secretion and the control of puberty. In terms of biological role, testicular luminal protein that signals through a ROS1-pathway to regulate the epididymal initial segment (IS) maturation, sperm maturation and male fertility. The sequence is that of Protein kinase C-binding protein NELL2 (NELL2) from Pongo abelii (Sumatran orangutan).